Reading from the N-terminus, the 541-residue chain is Chaperonin GroEL 1 (541 aa).

Residues 29-32, 86-90, Gly415, 479-481, and Asp495 each bind ATP; these read TIGP, DGTTT, and NAA.

The protein belongs to the chaperonin (HSP60) family. Forms a cylinder of 14 subunits composed of two heptameric rings stacked back-to-back. Interacts with the co-chaperonin GroES.

The protein resides in the cytoplasm. The catalysed reaction is ATP + H2O + a folded polypeptide = ADP + phosphate + an unfolded polypeptide.. Together with its co-chaperonin GroES, plays an essential role in assisting protein folding. The GroEL-GroES system forms a nano-cage that allows encapsulation of the non-native substrate proteins and provides a physical environment optimized to promote and accelerate protein folding. The protein is Chaperonin GroEL 1 of Streptomyces coelicolor (strain ATCC BAA-471 / A3(2) / M145).